The chain runs to 201 residues: Histidine biosynthesis bifunctional protein HisIE (201 aa).

Positions 1–111 (MKINWQKVDN…EKTTQPDWIF (111 aa)) are phosphoribosyl-AMP cyclohydrolase. The interval 112–201 (LSKLERLIAS…IHKLKERHTK (90 aa)) is phosphoribosyl-ATP pyrophosphohydrolase.

This sequence in the N-terminal section; belongs to the PRA-CH family. The protein in the C-terminal section; belongs to the PRA-PH family.

The protein resides in the cytoplasm. The catalysed reaction is 1-(5-phospho-beta-D-ribosyl)-ATP + H2O = 1-(5-phospho-beta-D-ribosyl)-5'-AMP + diphosphate + H(+). It carries out the reaction 1-(5-phospho-beta-D-ribosyl)-5'-AMP + H2O = 1-(5-phospho-beta-D-ribosyl)-5-[(5-phospho-beta-D-ribosylamino)methylideneamino]imidazole-4-carboxamide. The protein operates within amino-acid biosynthesis; L-histidine biosynthesis; L-histidine from 5-phospho-alpha-D-ribose 1-diphosphate: step 2/9. It participates in amino-acid biosynthesis; L-histidine biosynthesis; L-histidine from 5-phospho-alpha-D-ribose 1-diphosphate: step 3/9. This chain is Histidine biosynthesis bifunctional protein HisIE (hisI), found in Pasteurella multocida (strain Pm70).